The following is a 334-amino-acid chain: Glyoxylate reductase (334 aa).

NADP(+) contacts are provided by residues 158 to 161 (LGRI), 180 to 182 (SRT), and 239 to 241 (IAR). Active-site residues include arginine 241 and glutamate 270. Histidine 288 functions as the Proton donor in the catalytic mechanism. 288–290 (HIG) serves as a coordination point for NADP(+).

It belongs to the D-isomer specific 2-hydroxyacid dehydrogenase family. GyaR subfamily. As to quaternary structure, homodimer.

Its subcellular location is the cytoplasm. The enzyme catalyses glycolate + NAD(+) = glyoxylate + NADH + H(+). The polypeptide is Glyoxylate reductase (gyaR) (Pyrococcus horikoshii (strain ATCC 700860 / DSM 12428 / JCM 9974 / NBRC 100139 / OT-3)).